Reading from the N-terminus, the 275-residue chain is Phosphatidylglycerol--prolipoprotein diacylglyceryl transferase (275 aa).

The next 3 helical transmembrane spans lie at 18–38 (IEVH…YFIA), 55–75 (IIFW…VIFQ), and 89–109 (IWHG…TGVI). Arg137 is a binding site for a 1,2-diacyl-sn-glycero-3-phospho-(1'-sn-glycerol). A run of 2 helical transmembrane segments spans residues 203 to 223 (IGET…FVEG) and 235 to 255 (IRVA…MIIY).

It belongs to the Lgt family.

The protein localises to the cell membrane. It carries out the reaction L-cysteinyl-[prolipoprotein] + a 1,2-diacyl-sn-glycero-3-phospho-(1'-sn-glycerol) = an S-1,2-diacyl-sn-glyceryl-L-cysteinyl-[prolipoprotein] + sn-glycerol 1-phosphate + H(+). Its pathway is protein modification; lipoprotein biosynthesis (diacylglyceryl transfer). Functionally, catalyzes the transfer of the diacylglyceryl group from phosphatidylglycerol to the sulfhydryl group of the N-terminal cysteine of a prolipoprotein, the first step in the formation of mature lipoproteins. In Staphylococcus carnosus (strain TM300), this protein is Phosphatidylglycerol--prolipoprotein diacylglyceryl transferase.